We begin with the raw amino-acid sequence, 91 residues long: Apolipoprotein C-III (91 aa).

A signal peptide spans 1–20 (MQPRVLLAVTLLALLVSARA). Position 63 is a methionine sulfoxide (Met-63). The tract at residues 68–91 (DSMKGYWTSLIGRLSGFLDSTPSS) is lipid-binding.

It belongs to the apolipoprotein C3 family.

Its subcellular location is the secreted. Its function is as follows. Component of triglyceride-rich very low density lipoproteins (VLDL) and high density lipoproteins (HDL) in plasma. Plays a multifaceted role in triglyceride homeostasis. Intracellularly, promotes hepatic very low density lipoprotein 1 (VLDL1) assembly and secretion; extracellularly, attenuates hydrolysis and clearance of triglyceride-rich lipoproteins (TRLs). Impairs the lipolysis of TRLs by inhibiting lipoprotein lipase and the hepatic uptake of TRLs by remnant receptors. Formed of several curved helices connected via semiflexible hinges, so that it can wrap tightly around the curved micelle surface and easily adapt to the different diameters of its natural binding partners. This Cavia porcellus (Guinea pig) protein is Apolipoprotein C-III (APOC3).